We begin with the raw amino-acid sequence, 225 residues long: tRNA (guanine-N(1)-)-methyltransferase (225 aa).

Residues Gly112 and Ile132–Leu137 contribute to the S-adenosyl-L-methionine site.

It belongs to the RNA methyltransferase TrmD family. Homodimer.

It is found in the cytoplasm. It catalyses the reaction guanosine(37) in tRNA + S-adenosyl-L-methionine = N(1)-methylguanosine(37) in tRNA + S-adenosyl-L-homocysteine + H(+). Its function is as follows. Specifically methylates guanosine-37 in various tRNAs. In Bacteroides fragilis (strain ATCC 25285 / DSM 2151 / CCUG 4856 / JCM 11019 / LMG 10263 / NCTC 9343 / Onslow / VPI 2553 / EN-2), this protein is tRNA (guanine-N(1)-)-methyltransferase.